Consider the following 750-residue polypeptide: Methylmalonyl-CoA mutase, mitochondrial (750 aa).

Residues 1–32 (MLRAKNQLFLLSPHYLKQVKESSGSRLIQQRL) constitute a mitochondrion transit peptide. A malonyl-CoA-binding site is contributed by Q50. N6-acetyllysine is present on K89. Malonyl-CoA is bound by residues 96 to 99 (YPTM) and 106 to 110 (TIRQY). N6-acetyllysine is present on K212. Residues 216 to 218 (TIQ), R228, K255, H265, and 304 to 306 (RLS) contribute to the malonyl-CoA site. K335 carries the N6-acetyllysine modification. N6-succinyllysine is present on K343. At S481 the chain carries Phosphoserine. N6-succinyllysine is present on K595. K602 is modified (N6-acetyllysine). The region spanning 614-746 (RPRLLVAKMG…DDIEKCLEKK (133 aa)) is the B12-binding domain. H627 is an adenosylcob(III)alamin binding site.

Belongs to the methylmalonyl-CoA mutase family. As to quaternary structure, homodimer. Interacts (the apoenzyme form) with MMAA; the interaction is GTP dependent. It depends on adenosylcob(III)alamin as a cofactor.

It localises to the mitochondrion matrix. The protein resides in the mitochondrion. The protein localises to the cytoplasm. It catalyses the reaction (R)-methylmalonyl-CoA = succinyl-CoA. Its activity is regulated as follows. Inhibited by itaconyl-CoA, a metabolite that inactivates the coenzyme B12 cofactor. Catalyzes the reversible isomerization of methylmalonyl-CoA (MMCoA) (generated from branched-chain amino acid metabolism and degradation of dietary odd chain fatty acids and cholesterol) to succinyl-CoA (3-carboxypropionyl-CoA), a key intermediate of the tricarboxylic acid cycle. The polypeptide is Methylmalonyl-CoA mutase, mitochondrial (MMUT) (Pongo abelii (Sumatran orangutan)).